The sequence spans 323 residues: Aspartate carbamoyltransferase catalytic subunit (323 aa).

Positions 71 and 72 each coordinate carbamoyl phosphate. Position 99 (lysine 99) interacts with L-aspartate. The carbamoyl phosphate site is built by arginine 121, histidine 151, and glutamine 154. Residues arginine 184 and arginine 239 each contribute to the L-aspartate site. Residues glycine 280 and proline 281 each coordinate carbamoyl phosphate.

It belongs to the aspartate/ornithine carbamoyltransferase superfamily. ATCase family. Heterododecamer (2C3:3R2) of six catalytic PyrB chains organized as two trimers (C3), and six regulatory PyrI chains organized as three dimers (R2).

It catalyses the reaction carbamoyl phosphate + L-aspartate = N-carbamoyl-L-aspartate + phosphate + H(+). The protein operates within pyrimidine metabolism; UMP biosynthesis via de novo pathway; (S)-dihydroorotate from bicarbonate: step 2/3. Catalyzes the condensation of carbamoyl phosphate and aspartate to form carbamoyl aspartate and inorganic phosphate, the committed step in the de novo pyrimidine nucleotide biosynthesis pathway. This chain is Aspartate carbamoyltransferase catalytic subunit, found in Cupriavidus metallidurans (strain ATCC 43123 / DSM 2839 / NBRC 102507 / CH34) (Ralstonia metallidurans).